A 599-amino-acid chain; its full sequence is MTTQVPPSALLPLNPEQLARLQAATTDLTPTQLAWVSGYFWGVLNQQPAALAATPAPAAEMPGITIISASQTGNARRVAEALRDDLLTAKLNVKLVNAGDYKFKQIASEKLLIVVTSTQGEGEPPEEAVALHKFLFSKKAPKLENTAFAVFSLGDSSYEFFCQSGKDFDSKLAELGGERLLDRVDADVEYQTAASEWRARVVDALKSRAPVAAPSQSVATGAVNEIHTSPYSKDSPLVASLSVNQKITGRNSEKDVRHIEIDLGDSGLRYQPGDALGVWYQNDPALVKELVELLWLKGDEPVTVEGKTLPLNEALQWHFELTVNTANIVENYATLTRSETLLPLVGDKAKLQHYAATTPIVDMVRFSPAQLDAEALINLLRPLTPRLYSIASSQAEVENEVHVTVGVVRYDVEGRARAGGASSFLADRVEEEGEVRVFIEHNDNFRLPANPETPVIMIGPGTGIAPFRAFMQQRAADEAPGKNWLFFGNPHFTEDFLYQVEWQRYVKEGVLTRIDLAWSRDQKEKVYVQDKLREQGAELWRWINDGAHIYVCGDANRMAKDVEQALLEVIAEFGGMDTEAADEFLSELRVERRYQRDVY.

A Flavodoxin-like domain is found at 64 to 202 (ITIISASQTG…AASEWRARVV (139 aa)). FMN is bound by residues 70–75 (SQTGNA), 117–120 (STQG), and 153–162 (LGDSSYEFFC). The FAD-binding FR-type domain maps to 234 to 448 (DSPLVASLSV…IEHNDNFRLP (215 aa)). FAD is bound by residues T322, A356, 386–389 (RLYS), 404–406 (TVG), Y410, and 419–422 (GGAS). NADP(+) is bound by residues 519–520 (SR), 525–529 (KVYVQ), and D561. Residue Y599 participates in FAD binding.

This sequence belongs to the NADPH-dependent sulphite reductase flavoprotein subunit CysJ family. In the N-terminal section; belongs to the flavodoxin family. It in the C-terminal section; belongs to the flavoprotein pyridine nucleotide cytochrome reductase family. Alpha(8)-beta(8). The alpha component is a flavoprotein, the beta component is a hemoprotein. The cofactor is FAD. FMN serves as cofactor.

It catalyses the reaction hydrogen sulfide + 3 NADP(+) + 3 H2O = sulfite + 3 NADPH + 4 H(+). It functions in the pathway sulfur metabolism; hydrogen sulfide biosynthesis; hydrogen sulfide from sulfite (NADPH route): step 1/1. Component of the sulfite reductase complex that catalyzes the 6-electron reduction of sulfite to sulfide. This is one of several activities required for the biosynthesis of L-cysteine from sulfate. The flavoprotein component catalyzes the electron flow from NADPH -&gt; FAD -&gt; FMN to the hemoprotein component. The sequence is that of Sulfite reductase [NADPH] flavoprotein alpha-component from Escherichia coli O9:H4 (strain HS).